Consider the following 92-residue polypeptide: MARSLKKGPFVHYKLDKKVQENIAGGNKGVVKTWSRASMITPDFVGQTIAVHNGRQFVPVYVTENMVGHKLGEFSPTRSFRGHAGAKNKGKK.

The tract at residues 73 to 92 is disordered; it reads EFSPTRSFRGHAGAKNKGKK. Residues 80 to 92 show a composition bias toward basic residues; the sequence is FRGHAGAKNKGKK.

Belongs to the universal ribosomal protein uS19 family.

In terms of biological role, protein S19 forms a complex with S13 that binds strongly to the 16S ribosomal RNA. This Flavobacterium psychrophilum (strain ATCC 49511 / DSM 21280 / CIP 103535 / JIP02/86) protein is Small ribosomal subunit protein uS19.